An 827-amino-acid chain; its full sequence is Rho GTPase-activating protein 6 (827 aa).

In terms of domain architecture, PH spans 18 to 125; the sequence is TVYKSGPLFI…WKAALEQALA (108 aa). Positions 172–371 constitute a Rho-GAP domain; sequence LALEEIDGSP…ALLEDYGNMI (200 aa). Disordered stretches follow at residues 379–437 and 517–561; these read CSTS…SDYA and YTTS…SSGN. Basic and acidic residues predominate over residues 401–412; it reads IVVKHPDLHTLD. Residues 413–423 are compositionally biased toward acidic residues; sequence IEEGETDDDND. A compositionally biased stretch (polar residues) spans 517–543; sequence YTTSAEKPASKTTGSSTVNSKRSSSWG. The stretch at 560-684 forms a coiled coil; it reads GNDELLIQRL…HQLSQQRQHH (125 aa).

In terms of biological role, acts as a GTPase activator for the Rac-type GTPase by converting it to an inactive GDP-bound state. The polypeptide is Rho GTPase-activating protein 6 (ROPGAP6) (Arabidopsis thaliana (Mouse-ear cress)).